A 144-amino-acid chain; its full sequence is 3-dehydroquinate dehydratase (144 aa).

Tyr24 (proton acceptor) is an active-site residue. Residues Asn73, His79, and Asp86 each contribute to the substrate site. His99 (proton donor) is an active-site residue. Residues 100–101 (LS) and Arg110 each bind substrate.

Belongs to the type-II 3-dehydroquinase family. Homododecamer.

The enzyme catalyses 3-dehydroquinate = 3-dehydroshikimate + H2O. It functions in the pathway metabolic intermediate biosynthesis; chorismate biosynthesis; chorismate from D-erythrose 4-phosphate and phosphoenolpyruvate: step 3/7. Its function is as follows. Catalyzes a trans-dehydration via an enolate intermediate. This Shewanella putrefaciens (strain CN-32 / ATCC BAA-453) protein is 3-dehydroquinate dehydratase.